We begin with the raw amino-acid sequence, 410 residues long: Translation initiation factor 2 subunit gamma (410 aa).

Residues 6–203 enclose the tr-type G domain; sequence QSEINIGMVG…AIEDLMPTPE (198 aa). Positions 15 to 22 are G1; sequence GHVDHGKT. Mg(2+) contacts are provided by Asp18, Thr22, Gly43, and Ser45. Residue 18–23 participates in GTP binding; that stretch reads DHGKTS. The interval 43–47 is G2; the sequence is GISIR. Zn(2+) is bound by residues Cys58, Cys61, Cys73, and Cys76. Residues 90-93 are G3; the sequence is DAPG. GTP is bound by residues 146 to 149 and 181 to 183; these read NKID and SAH. Positions 146-149 are G4; it reads NKID. The tract at residues 181–183 is G5; that stretch reads SAH.

This sequence belongs to the TRAFAC class translation factor GTPase superfamily. Classic translation factor GTPase family. EIF2G subfamily. As to quaternary structure, heterotrimer composed of an alpha, a beta and a gamma chain. Requires Mg(2+) as cofactor.

It catalyses the reaction GTP + H2O = GDP + phosphate + H(+). EIF-2 functions in the early steps of protein synthesis by forming a ternary complex with GTP and initiator tRNA. This is Translation initiation factor 2 subunit gamma from Methanococcus aeolicus (strain ATCC BAA-1280 / DSM 17508 / OCM 812 / Nankai-3).